We begin with the raw amino-acid sequence, 72 residues long: UPF0154 protein BLi02038/BL02936 (72 aa).

Residues 4-24 (WVVILVGVLALLAGVALGFFI) form a helical membrane-spanning segment.

It belongs to the UPF0154 family.

Its subcellular location is the cell membrane. This Bacillus licheniformis (strain ATCC 14580 / DSM 13 / JCM 2505 / CCUG 7422 / NBRC 12200 / NCIMB 9375 / NCTC 10341 / NRRL NRS-1264 / Gibson 46) protein is UPF0154 protein BLi02038/BL02936.